Here is a 621-residue protein sequence, read N- to C-terminus: uncharacterized protein (621 aa).

A run of 3 helical transmembrane segments spans residues 240-260 (FFDAFFVILLLICHLNNNLLW), 548-568 (LGIVTAVVFGIIEFFNCVWTV), and 587-607 (VIIGIGTILVLTLLITILTFM).

It localises to the cell membrane. This is an uncharacterized protein from Mycoplasma pneumoniae (strain ATCC 29342 / M129 / Subtype 1) (Mycoplasmoides pneumoniae).